A 267-amino-acid polypeptide reads, in one-letter code: tRNA (guanine-N(1)-)-methyltransferase (267 aa).

Residues glycine 119 and 139 to 144 each bind S-adenosyl-L-methionine; that span reads IGDYVL.

Belongs to the RNA methyltransferase TrmD family. In terms of assembly, homodimer.

The protein localises to the cytoplasm. The enzyme catalyses guanosine(37) in tRNA + S-adenosyl-L-methionine = N(1)-methylguanosine(37) in tRNA + S-adenosyl-L-homocysteine + H(+). Specifically methylates guanosine-37 in various tRNAs. In Chromohalobacter salexigens (strain ATCC BAA-138 / DSM 3043 / CIP 106854 / NCIMB 13768 / 1H11), this protein is tRNA (guanine-N(1)-)-methyltransferase.